Reading from the N-terminus, the 466-residue chain is MTMLDTVQHHSQPQSGVPQNHLADEFVETLRLAVPMMLTQLGQIAMITTDLALIGRLGEDAVAAAALAHTVYFVSFTFGLGLMAAVSPLVAQAFGAGDVRRIRRALRVGLWVALLISLPMMASPLYGEHILIALGQVPQSAALAQRYLNGLAWGIAPALGFIALRGMMSAVNRPQPPLWITVAAIPVNAALVYVLIHGLFGLPELGLFGAGLATTLVNLGTFLAVLAIAAWRKPFSDYRPLAHLWRIDWPLVRQLIALGAPISSSLLLEYGLFSSAALLMGLISTTALAAHQIALQVTAVLFMVPLGIGMAATVRVGHAFGRNDPAAVRRAGLVAAVLGVALVSALTVAIILGRYELGRLFFGGSEASAATVELTATLLLVGATFFIADGLQTIMGGALRGINDTRMTLAFAAIGYWCVAFPVAWVLAFHTGLGAVGVWIGFSIGTFVYAGLLVLRFRMLARRLVG.

The next 11 helical transmembrane spans lie at alanine 68–valine 90, leucine 110–isoleucine 132, alanine 142–leucine 164, proline 177–leucine 199, glycine 209–tryptophan 231, leucine 251–phenylalanine 273, leucine 288–methionine 310, alanine 331–glycine 353, serine 368–isoleucine 387, methionine 407–phenylalanine 429, and leucine 433–leucine 455.

This sequence belongs to the multi antimicrobial extrusion (MATE) (TC 2.A.66.1) family.

The protein localises to the cell inner membrane. Multidrug efflux pump. The chain is Probable multidrug resistance protein NorM (norM) from Bradyrhizobium diazoefficiens (strain JCM 10833 / BCRC 13528 / IAM 13628 / NBRC 14792 / USDA 110).